The chain runs to 235 residues: Large ribosomal subunit protein uL1 (235 aa).

Belongs to the universal ribosomal protein uL1 family. In terms of assembly, part of the 50S ribosomal subunit.

In terms of biological role, binds directly to 23S rRNA. The L1 stalk is quite mobile in the ribosome, and is involved in E site tRNA release. Protein L1 is also a translational repressor protein, it controls the translation of the L11 operon by binding to its mRNA. This is Large ribosomal subunit protein uL1 from Mycobacterium tuberculosis (strain ATCC 25177 / H37Ra).